A 215-amino-acid polypeptide reads, in one-letter code: Fanconi anemia core complex-associated protein 24 (215 aa).

As to quaternary structure, belongs to the multisubunit FA complex composed of FANCA, FANCB, FANCC, FANCE, FANCF, FANCG, FANCL/PHF9, FANCM and FAAP24. Interacts with FANCM.

The protein resides in the nucleus. Its function is as follows. Plays a role in DNA repair through recruitment of the FA core complex to damaged DNA. Regulates FANCD2 monoubiquitination upon DNA damage. Induces chromosomal instability as well as hypersensitivity to DNA cross-linking agents, when repressed. Targets FANCM/FAAP24 complex to the DNA, preferentially to single strand DNA. The sequence is that of Fanconi anemia core complex-associated protein 24 from Bos taurus (Bovine).